We begin with the raw amino-acid sequence, 7388 residues long: Microtubule-actin cross-linking factor 1, isoforms 1/2/3/4/5 (7388 aa).

Positions 1–47 (MSSSDEETLSERSCRSERSCRSERSYRSERSGSLSPCPPGDTLPWNL) are disordered. Positions 1 to 295 (MSSSDEETLS…VITYVSSIYD (295 aa)) are actin-binding. At Ser4 the chain carries Phosphoserine. The span at 9-30 (LSERSCRSERSCRSERSYRSER) shows a compositional bias: basic and acidic residues. Ser35 and Ser57 each carry phosphoserine. Calponin-homology (CH) domains lie at 78 to 181 (RVQK…LHFQ) and 194 to 298 (MSAK…DAFP). 2 LRR repeats span residues 148–171 (QRQV…LTLG) and 240–264 (LVDM…VAER). At Ser280 the chain carries Phosphoserine. LRR repeat units lie at residues 377–399 (LYKL…YHPN) and 441–464 (LNCE…LESG). Position 814 is a phosphoserine (Ser814). The region spanning 868–925 (KNTISVKAVCDYRQIEITICKNDECVLEDNSQRTKWKVISPTGNEAMVPSVCFLIPPP) is the SH3 domain. One copy of the LRR 5 repeat lies at 1050 to 1073 (ISELKNIRLRLEEYEQRVVKRIQS). A Phosphoserine modification is found at Ser1122. LRR repeat units follow at residues 1128–1154 (VPTL…VYLN), 1187–1210 (LADL…VKDK), and 1257–1282 (HRVI…DYRA). Residues Ser1367 and Ser1376 each carry the phosphoserine modification. Plectin repeat units follow at residues 1577-1621 (LVLL…RELQ), 1654-1696 (LKIL…VLES), 1769-1809 (RLLE…CAIL), 1811-1848 (RQLQ…VILE), and 1855-1886 (GLLW…KILS). Phosphoserine is present on residues Ser2006 and Ser2051. The segment at 2051-2085 (SQNKEYPDREDCTTEKGKKTTVETEDSSVENPEQD) is disordered. Basic and acidic residues predominate over residues 2055–2072 (EYPDREDCTTEKGKKTTV). Phosphoserine is present on Ser2077. Plectin repeat units lie at residues 2290-2332 (LNVL…KLME), 2367-2410 (NVLM…LERQ), 2411-2437 (VVTG…GLVD), 2501-2543 (RLLT…LKRV), 2581-2612 (EVQA…LTNE), and 2686-2730 (LKVL…ASHQ). 2 disordered regions span residues 3013–3034 (EHDS…GKEA) and 3104–3174 (SEPF…NECK). A compositionally biased stretch (basic and acidic residues) spans 3115–3124 (EGLHYQESDG). Residue Ser3122 is modified to Phosphoserine. Polar residues predominate over residues 3129 to 3158 (TGPSQISKTDKSFQGTTRQETNYQDSWVTS). 2 LRR repeats span residues 3239 to 3262 (LTGE…SIED) and 3264 to 3283 (VTQR…LFKG). Residues 3321-3332 (EKTPQEKLRESP) are compositionally biased toward basic and acidic residues. The disordered stretch occupies residues 3321–3350 (EKTPQEKLRESPGSEQTPFMTAPEGKGNGG). Phosphoserine is present on Ser3331. LRR repeat units follow at residues 3646–3669 (QQDL…IQNR) and 3696–3720 (LTAL…TRVA). Spectrin repeat units lie at residues 3883 to 3957 (ELQK…NSFK) and 4000 to 4108 (QYHQ…SLLQ). A Phosphoserine modification is found at Ser3927. The stretch at 3936–3958 (KGDLRFVTISGQKVLDMENSFKE) is one LRR 13 repeat. 2 LRR repeats span residues 4125–4150 (LQSI…VIQE) and 4261–4287 (IQEL…ELSS). The Spectrin 3 repeat unit spans residues 4466 to 4574 (RMEEVHKEAN…TVARQRQLEE (109 aa)). A phosphoserine mark is found at Ser4495, Ser4496, and Ser4521. LRR repeat units lie at residues 4511-4534 (KAFL…LAGL), 4601-4624 (GVLG…QFML), and 4769-4792 (KKRL…RINR). Spectrin repeat units follow at residues 4800 to 4904 (TQQF…SRLK) and 4909 to 5012 (KAQK…SLEE). Residues Ser4836 and Ser4962 each carry the phosphoserine modification. LRR repeat units lie at residues 5051–5076 (NKNL…YLRN), 5172–5194 (NKIH…MLEE), and 5281–5304 (KEQV…LIQS). Spectrin repeat units lie at residues 5236–5341 (EDFY…QLQE), 5348–5450 (KFQD…QLED), and 5455–5557 (AKQF…LRTL). Thr5435 carries the post-translational modification Phosphothreonine. The tract at residues 5583-5603 (EELATSGGQSPTGEQIPQFQQ) is disordered. Positions 5588–5603 (SGGQSPTGEQIPQFQQ) are enriched in polar residues. LRR repeat units lie at residues 5695–5719 (MALG…AFSI) and 5804–5828 (AQLP…QLRE). Spectrin repeat units lie at residues 5783–5885 (NQFW…ALDE), 6005–6110 (LAEK…KLED), 6115–6219 (AVQY…HKLE), 6225–6328 (LGQF…QQLQ), 6333–6439 (QAQG…KLEE), 6443–6547 (LATE…RSLD), 6552–6658 (RAKQ…KLEE), 6665–6766 (QFMD…RLEQ), and 6771–6874 (AEVF…QRLE). 2 positions are modified to phosphoserine: Ser5808 and Ser6032. Residue Lys6210 is modified to N6-acetyllysine. One copy of the LRR 24 repeat lies at 6496-6519 (RDQIIELDQTGNQLKFLSQKQDVV). A disordered region spans residues 6951–6981 (PTHAPFIEKSRSGGRKSLSQPTPPPMPILSQ). Ser6967 carries the post-translational modification Phosphoserine. EF-hand domains are found at residues 7041–7076 (HKKS…SKFP) and 7077–7112 (TTKL…NKDA). 10 residues coordinate Ca(2+): Asp7054, Asp7056, Asp7058, Lys7060, Glu7065, Asp7090, Asp7092, Asp7094, Tyr7096, and Glu7101. The 73-residue stretch at 7117–7189 (TDADKIEDEV…EFLVKNDPCR (73 aa)) folds into the GAR domain. Residues 7117–7388 (TDADKIEDEV…ASPRTPGPKR (272 aa)) form a C-terminal tail region. Positions 7205 to 7388 (PEGASQGMTP…ASPRTPGPKR (184 aa)) are disordered. A compositionally biased stretch (low complexity) spans 7225–7259 (SSRAASPTRSSSSASQSNHSCTSMPSSPATPASGT). At Thr7254 the chain carries Phosphothreonine. Over residues 7275-7299 (TFHSSRTSLAGDTSNSSSPASTGAK) the composition is skewed to polar residues. 2 positions are modified to phosphoserine: Ser7279 and Ser7292. Low complexity predominate over residues 7310 to 7324 (SRPGSRAGSRAGSRA). Residues 7313 to 7328 (GSRAGSRAGSRASSRR) form a 4 X 4 AA tandem repeats of [GS]-S-R-[AR] region. A phosphoserine mark is found at Ser7330 and Ser7333. The span at 7339-7361 (ETQSACSDTSESSAAGGQGNSRR) shows a compositional bias: polar residues.

Belongs to the plakin or cytolinker family. Isoform 2: Interacts with MAPRE1, CLASP1, CLASP2, AXIN1 and LRP6. Isoform 2: Found in a complex composed of MACF1, APC, AXIN1, CTNNB1 and GSK3B. Isoform 2: Interacts with GOLGA4. Isoform 2: Interacts with CAMSAP3. In terms of processing, phosphorylated on serine residues in the C-terminal tail by GSK3B. Phosphorylation inhibits microtubule-binding and this plays a critical role in bulge stem cell migration and skin wound repair. Wnt-signaling can repress phosphorylation. As to expression, isoform 2: Ubiquitously expressed. Isoform 1: Expressed in cell lines NCI-H460, A-549 and HaCaT. Isoform 4: Expressed in heart, lung, pituitary and placenta, not found in brain, kidney, liver, pancreas or skeletal muscle.

It is found in the cytoplasm. Its subcellular location is the cytoskeleton. The protein localises to the golgi apparatus. The protein resides in the cell membrane. It localises to the cell projection. It is found in the ruffle membrane. Its function is as follows. F-actin-binding protein which plays a role in cross-linking actin to other cytoskeletal proteins and also binds to microtubules. Plays an important role in ERBB2-dependent stabilization of microtubules at the cell cortex. Acts as a positive regulator of Wnt receptor signaling pathway and is involved in the translocation of AXIN1 and its associated complex (composed of APC, CTNNB1 and GSK3B) from the cytoplasm to the cell membrane. Has actin-regulated ATPase activity and is essential for controlling focal adhesions (FAs) assembly and dynamics. Interaction with CAMSAP3 at the minus ends of non-centrosomal microtubules tethers microtubules minus-ends to actin filaments, regulating focal adhesion size and cell migration. May play role in delivery of transport vesicles containing GPI-linked proteins from the trans-Golgi network through its interaction with GOLGA4. Plays a key role in wound healing and epidermal cell migration. Required for efficient upward migration of bulge cells in response to wounding and this function is primarily rooted in its ability to coordinate microtubule dynamics and polarize hair follicle stem cells. As a regulator of actin and microtubule arrangement and stabilization, it plays an essential role in neurite outgrowth, branching and spine formation during brain development. This is Microtubule-actin cross-linking factor 1, isoforms 1/2/3/4/5 from Homo sapiens (Human).